Here is a 92-residue protein sequence, read N- to C-terminus: Large ribosomal subunit protein eL43 (92 aa).

The C4-type zinc finger occupies 39–60 (CEFCGKFAVKRKAVGIWGCKDC).

It belongs to the eukaryotic ribosomal protein eL43 family.

This is Large ribosomal subunit protein eL43 (RPL37A) from Pseudotsuga menziesii (Douglas-fir).